We begin with the raw amino-acid sequence, 186 residues long: Cell division protein SepF (186 aa).

2 disordered regions span residues 14 to 59 (EHDE…NETS) and 157 to 186 (GRSQ…RLAQ). Over residues 16 to 27 (DEYEEDYDEEME) the composition is skewed to acidic residues. Positions 159–171 (SQESNETSSSVSS) are enriched in low complexity.

Belongs to the SepF family. As to quaternary structure, homodimer. Interacts with FtsZ.

It is found in the cytoplasm. Functionally, cell division protein that is part of the divisome complex and is recruited early to the Z-ring. Probably stimulates Z-ring formation, perhaps through the cross-linking of FtsZ protofilaments. Its function overlaps with FtsA. This Synechocystis sp. (strain ATCC 27184 / PCC 6803 / Kazusa) protein is Cell division protein SepF.